Consider the following 237-residue polypeptide: 3-oxoacyl-[acyl-carrier-protein] reductase (237 aa).

The residue at position 1 (methionine 1) is an N-acetylmethionine. NADP(+)-binding positions include 11–14 (SRGI) and 34–35 (RN). An N6-acetyllysine modification is found at lysine 40. NADP(+) contacts are provided by residues aspartate 56 and 83–85 (AAG). Lysine 96 bears the N6-acetyllysine mark. Residue serine 135 participates in substrate binding. NADP(+) contacts are provided by residues tyrosine 148, lysine 152, and 181 to 183 (VHT). Tyrosine 148 functions as the Proton acceptor in the catalytic mechanism. Position 195 is an N6-acetyllysine (lysine 195).

The protein belongs to the short-chain dehydrogenases/reductases (SDR) family. Homotetramer (in vitro). Heterotetramer with HSD17B8; contains two molecules each of HSD17B8 and CBR4. Does not form homotetramers when HSD17B8 is coexpressed, only heterotetramers (in vitro). Detected in liver and kidney (at protein level). Displays the highest expression in neuronal and muscle tissues.

It localises to the mitochondrion matrix. It catalyses the reaction a (3R)-hydroxyacyl-[ACP] + NADP(+) = a 3-oxoacyl-[ACP] + NADPH + H(+). The enzyme catalyses a quinone + NADPH + H(+) = a quinol + NADP(+). Its pathway is lipid metabolism; fatty acid biosynthesis. In terms of biological role, component of the heterotetramer complex KAR (3-ketoacyl-[acyl carrier protein] reductase or 3-ketoacyl-[ACP] reductase) that forms part of the mitochondrial fatty acid synthase (mtFAS). Beta-subunit of the KAR heterotetramer complex, responsible for the 3-ketoacyl-ACP reductase activity of the mtFAS, reduces 3-oxoacyl-[ACP] to (3R)-hydroxyacyl-[ACP] in a NADPH-dependent manner with no chain length preference, thereby participating in mitochondrial fatty acid biosynthesis. The homotetramer has NADPH-dependent quinone reductase activity (in vitro), hence could play a role in protection against cytotoxicity of exogenous quinones. As a heterotetramer, it can also reduce 9,10-phenanthrenequinone, 1,4-benzoquinone and various other o-quinones and p-quinones (in vitro). This Homo sapiens (Human) protein is 3-oxoacyl-[acyl-carrier-protein] reductase (CBR4).